The chain runs to 265 residues: MPEPTFHELAQLPPPVLRQLIRRGDYAGHTSGLGQRHLQANLVILQKSWADEFLRFCALNPRACPLLDVSEPGSPHFARLGADIDVRSDLPRYRVHRRGQEPVEVNDIGAFWEADFVAFAIGCSFSFEQALLDAGIGLRHLELGRNVAMYRTAIATRPSGRLAGPTVVSMRPLKAAEAIRAIQITSRFPMTHGAPLHLGDPALIGIRDLARPDYGDPVPLAADEIPLFWACGVTPQAVLAEAQPELYISHAPGHMLVSDRLYDEL.

It belongs to the D-glutamate cyclase family.

This chain is Putative hydro-lyase PA14_37210, found in Pseudomonas aeruginosa (strain UCBPP-PA14).